We begin with the raw amino-acid sequence, 65 residues long: Prokaryotic ubiquitin-like protein Pup (65 aa).

A compositionally biased stretch (basic and acidic residues) spans 1 to 13; the sequence is MAQEQKQPRKSSE. Residues 1-34 form a disordered region; the sequence is MAQEQKQPRKSSEADEAVEAVAETDVSERKEALD. The segment at 21–59 is ARC ATPase binding; the sequence is VAETDVSERKEALDSDVDDILDEIDDVLETNAEDFVKSF. Residues 25–49 are a coiled coil; sequence DVSERKEALDSDVDDILDEIDDVLE. Glutamate 65 participates in a covalent cross-link: Isoglutamyl lysine isopeptide (Glu-Lys) (interchain with K-? in acceptor proteins).

This sequence belongs to the prokaryotic ubiquitin-like protein family. As to quaternary structure, strongly interacts with the proteasome-associated ATPase ARC through a hydrophobic interface; the interacting region of Pup lies in its C-terminal half. There is one Pup binding site per ARC hexamer ring.

It participates in protein degradation; proteasomal Pup-dependent pathway. In terms of biological role, protein modifier that is covalently attached to lysine residues of substrate proteins, thereby targeting them for proteasomal degradation. The tagging system is termed pupylation. This chain is Prokaryotic ubiquitin-like protein Pup, found in Nocardioides sp. (strain ATCC BAA-499 / JS614).